Consider the following 706-residue polypeptide: Probable serine/threonine-protein kinase zyg-1 (706 aa).

Positions 13-249 constitute a Protein kinase domain; the sequence is YSHLKEIGKG…LTQIVLSEFM (237 aa). ATP is bound by residues 19 to 27 and Lys41; that span reads IGKGGFGVV. The Proton acceptor role is filled by Asp131. Composition is skewed to basic and acidic residues over residues 261–290 and 323–336; these read SREH…DGRA and FDSE…RDSG. 2 disordered regions span residues 261–351 and 566–632; these read SREH…NRSQ and SPSS…VAPS. A compositionally biased stretch (low complexity) spans 566-579; the sequence is SPSSLMPSGSSQTS. Polar residues-rich tracts occupy residues 580-592 and 603-629; these read RFPF…NQPS and KPTS…SPSV.

The protein belongs to the protein kinase superfamily. Ser/Thr protein kinase family. Interacts with sel-10. Probably ubiquitinated by the SCF(sel-10) and SCF(lin-23) E3 ubiquitin ligase complexes, leading to its proteasomal degradation.

The protein localises to the cytoplasm. It localises to the cytoskeleton. It is found in the microtubule organizing center. Its subcellular location is the centrosome. The protein resides in the centriole. The enzyme catalyses L-seryl-[protein] + ATP = O-phospho-L-seryl-[protein] + ADP + H(+). It carries out the reaction L-threonyl-[protein] + ATP = O-phospho-L-threonyl-[protein] + ADP + H(+). Its function is as follows. Protein kinase that plays a central role in centrosome duplication, control of centrosome size, spindle formation and nuclear envelope breakdown during cell divisions. Paternal copy is required to regulate synthesis of daughter centrioles prior to fertilization. Maternal copy regulates centrosome duplication during later cell cycles. Functions upstream of sas-5 and sas-6, and is required for their localization to the centrosome. Its role in nuclear envelope breakdown is mediated by the spindly-like protein spdl-1 and the RZZ complex, which in turn recruits the spindle checkpoint proteins mdf-1 and mdf-2, dynein and dynactin to unattached kinetochores. The chain is Probable serine/threonine-protein kinase zyg-1 from Caenorhabditis elegans.